We begin with the raw amino-acid sequence, 920 residues long: DNA ligase (920 aa).

Residues 90 to 94, 139 to 140, and Glu-173 each bind NAD(+); these read DAAYD and SL. Residue Lys-175 is the N6-AMP-lysine intermediate of the active site. Residues Arg-196, Glu-235, Lys-360, and Lys-384 each coordinate NAD(+). The Zn(2+) site is built by Cys-481, Cys-484, Cys-500, and Cys-506. The disordered stretch occupies residues 659 to 691; it reads RAQGEAAIESAETQGDTASETTGAPTGAEAPLG. Residues 669–682 are compositionally biased toward polar residues; it reads AETQGDTASETTGA. The BRCT domain occupies 839–920; sequence SLPQTLAGKT…FAQLLATGTI (82 aa).

This sequence belongs to the NAD-dependent DNA ligase family. LigA subfamily. Mg(2+) serves as cofactor. The cofactor is Mn(2+).

The enzyme catalyses NAD(+) + (deoxyribonucleotide)n-3'-hydroxyl + 5'-phospho-(deoxyribonucleotide)m = (deoxyribonucleotide)n+m + AMP + beta-nicotinamide D-nucleotide.. Functionally, DNA ligase that catalyzes the formation of phosphodiester linkages between 5'-phosphoryl and 3'-hydroxyl groups in double-stranded DNA using NAD as a coenzyme and as the energy source for the reaction. It is essential for DNA replication and repair of damaged DNA. The chain is DNA ligase from Bifidobacterium longum (strain NCC 2705).